Consider the following 258-residue polypeptide: Venom plasminogen activator Haly-PA (258 aa).

An N-terminal signal peptide occupies residues 1 to 18 (MALIRVLANLLILQLSYA). Positions 19-24 (QKSSEL) are excised as a propeptide. The Peptidase S1 domain maps to 25 to 249 (VVGGDECNIN…HLDWIKSIIA (225 aa)). Cystine bridges form between C31/C163, C50/C66, C98/C256, C142/C210, C174/C189, and C200/C225. N44 carries an N-linked (GlcNAc...) asparagine glycan. Catalysis depends on charge relay system residues H65 and D110. The active-site Charge relay system is the S204.

Belongs to the peptidase S1 family. Snake venom subfamily. As to quaternary structure, monomer. Post-translationally, glycosylated. As to expression, expressed by the venom gland.

The protein localises to the secreted. Its function is as follows. Snake venom serine protease that activates plasminogen. Displays indirect fibrino(geno)lytic activity through conversion of plasminogen to plasmin. Shows a preferential cleavage at Arg-|-Xaa instead of Lys-|-Xaa bonds. The chain is Venom plasminogen activator Haly-PA from Gloydius brevicauda (Korean slamosa snake).